The chain runs to 363 residues: MRVSDFNFDLPDELIARYPKTDRVSCRLLQLNGENGEIFHRTFSDVLDLIDQGDLLIFNNTHVIPARMFGRKASGGKIEVLVERMLDEHRFLAHIRSSKSPKEGAELFLGEDKLGENNGIKAVMKARHSSLFEVELSDKSTALLDVLQTIGHMPLPPYIDRPDEEADKECYQTVYSKVPGAVAAPTAGLHFDKNLLEKLKAKGVNFEFVTLHVGAGTFQPVRVENIEDHVMHAEYVEVSQEVCNAIIATKKAGKRVIAVGTTSVRSIESAALSAEEFGNPDLIEPYFSDTSIFIYPGKKFRVVDCLITNFHLPESTLIMLVSAFAGYKNTMNAYKHAVQEKYRFFSYGDAMFINKNSNVRELE.

This sequence belongs to the QueA family. In terms of assembly, monomer.

It localises to the cytoplasm. The catalysed reaction is 7-aminomethyl-7-carbaguanosine(34) in tRNA + S-adenosyl-L-methionine = epoxyqueuosine(34) in tRNA + adenine + L-methionine + 2 H(+). It participates in tRNA modification; tRNA-queuosine biosynthesis. Functionally, transfers and isomerizes the ribose moiety from AdoMet to the 7-aminomethyl group of 7-deazaguanine (preQ1-tRNA) to give epoxyqueuosine (oQ-tRNA). In Haemophilus influenzae (strain 86-028NP), this protein is S-adenosylmethionine:tRNA ribosyltransferase-isomerase.